A 394-amino-acid polypeptide reads, in one-letter code: Queuine tRNA-ribosyltransferase (394 aa).

The active-site Proton acceptor is the aspartate 95. Substrate-binding positions include 95-99, aspartate 149, glutamine 190, and glycine 217; that span reads DSGGF. The segment at 248 to 254 is RNA binding; sequence GVGTPID. Aspartate 267 acts as the Nucleophile in catalysis. The RNA binding; important for wobble base 34 recognition stretch occupies residues 272-276; that stretch reads TRNAR. Zn(2+) contacts are provided by cysteine 305, cysteine 307, cysteine 310, and histidine 337. The tract at residues 375–394 is disordered; the sequence is NDANETVGATESTESTESTE.

The protein belongs to the queuine tRNA-ribosyltransferase family. In terms of assembly, homodimer. Within each dimer, one monomer is responsible for RNA recognition and catalysis, while the other monomer binds to the replacement base PreQ1. The cofactor is Zn(2+).

The catalysed reaction is 7-aminomethyl-7-carbaguanine + guanosine(34) in tRNA = 7-aminomethyl-7-carbaguanosine(34) in tRNA + guanine. The protein operates within tRNA modification; tRNA-queuosine biosynthesis. Its function is as follows. Catalyzes the base-exchange of a guanine (G) residue with the queuine precursor 7-aminomethyl-7-deazaguanine (PreQ1) at position 34 (anticodon wobble position) in tRNAs with GU(N) anticodons (tRNA-Asp, -Asn, -His and -Tyr). Catalysis occurs through a double-displacement mechanism. The nucleophile active site attacks the C1' of nucleotide 34 to detach the guanine base from the RNA, forming a covalent enzyme-RNA intermediate. The proton acceptor active site deprotonates the incoming PreQ1, allowing a nucleophilic attack on the C1' of the ribose to form the product. After dissociation, two additional enzymatic reactions on the tRNA convert PreQ1 to queuine (Q), resulting in the hypermodified nucleoside queuosine (7-(((4,5-cis-dihydroxy-2-cyclopenten-1-yl)amino)methyl)-7-deazaguanosine). This chain is Queuine tRNA-ribosyltransferase, found in Sorangium cellulosum (strain So ce56) (Polyangium cellulosum (strain So ce56)).